The primary structure comprises 396 residues: L-cysteine desulfidase (396 aa).

The active-site Proton acceptor is C23. Positions 288, 330, and 337 each coordinate [4Fe-4S] cluster.

The protein belongs to the L-cysteine desulfidase family. In terms of assembly, homotrimer. [4Fe-4S] cluster serves as cofactor.

The catalysed reaction is L-cysteine + H2O = hydrogen sulfide + pyruvate + NH4(+) + H(+). In terms of biological role, catalyzes the cleavage of L-cysteine to form 2-aminoprop-2-enoate and sulfide. The former then spontaneously hydrolyzes to pyruvate and NH(3). May be responsible for the production of sulfide required for the biosynthesis of iron-sulfur centers in this archaea. This Methanococcus maripaludis (strain C6 / ATCC BAA-1332) protein is L-cysteine desulfidase.